A 406-amino-acid polypeptide reads, in one-letter code: Phosphorylase b kinase gamma catalytic chain, liver/testis isoform (406 aa).

The 268-residue stretch at 24-291 (YDPKDVIGRG…AEQALQHPFF (268 aa)) folds into the Protein kinase domain. ATP is bound by residues 30–38 (IGRGVSSVV) and Lys-53. The Proton acceptor role is filled by Asp-153. Positions 306–330 (QRFRVAVWTVLAAGRVALSTHRVRP) are calmodulin-binding (domain-N). Phosphoserine is present on Ser-345. The interval 346-370 (VRHLIDNCAFRLYGHWVKKGEQQNR) is calmodulin-binding (domain-C).

It belongs to the protein kinase superfamily. CAMK Ser/Thr protein kinase family. In terms of assembly, hexadecamer of 4 heterotetramers, each composed of alpha, beta, gamma, and delta subunits. Alpha (PHKA1 or PHKA2) and beta (PHKB) are regulatory subunits, gamma (PHKG1 or PHKG2) is the catalytic subunit, and delta is calmodulin.

The enzyme catalyses 2 ATP + phosphorylase b = 2 ADP + phosphorylase a.. Its function is as follows. Catalytic subunit of the phosphorylase b kinase (PHK), which mediates the neural and hormonal regulation of glycogen breakdown (glycogenolysis) by phosphorylating and thereby activating glycogen phosphorylase. May regulate glycogeneolysis in the testis. In vitro, phosphorylates PYGM. In Homo sapiens (Human), this protein is Phosphorylase b kinase gamma catalytic chain, liver/testis isoform (PHKG2).